A 154-amino-acid chain; its full sequence is Large ribosomal subunit protein uL13 (154 aa).

The protein belongs to the universal ribosomal protein uL13 family. As to quaternary structure, part of the 50S ribosomal subunit.

In terms of biological role, this protein is one of the early assembly proteins of the 50S ribosomal subunit, although it is not seen to bind rRNA by itself. It is important during the early stages of 50S assembly. This chain is Large ribosomal subunit protein uL13, found in Rhizobium leguminosarum bv. trifolii (strain WSM2304).